Consider the following 103-residue polypeptide: ATP synthase subunit f, mitochondrial (103 aa).

Residues 1–6 (MIFRRQ) constitute a mitochondrion transit peptide.

F-type ATP synthases have 2 components, the catalytic core F(1) and the membrane-embedded component F(0), linked together by a central stalk and a peripheral stalk. The central stalk, also called rotor shaft, is often seen as part of F(1). The peripheral stalk is seen as part of F(0). F(0) contains the membrane channel next to the rotor. F-type ATP synthases form dimers but each monomer functions independently in ATP generation. The dimer consists of 17 different polypeptides: ATP1 (subunit alpha, 3 molecules per monomer, part of F(1)), ATP2 (subunit beta, 3 copies per monomer, part of F(1)), ATP3 (subunit gamma, part of the central stalk), ATP4 (subunit b, part of the peripheral stalk), ATP5/OSCP (subunit 5/OSCP, part of the peripheral stalk), ATP6 (subunit a, part of the peripheral stalk), ATP7 (subunit d, part of the peripheral stalk), ATP8 (subunit 8, part of the peripheral stalk), OLI1 (subunit c, part of the rotor, 10 molecules per monomer), ATP14 (subunit h, part of the peripheral stalk), ATP15 (subunit epsilon, part of the central stalk), ATP16 (subunit delta, part of the central stalk), ATP17 (subunit f, part of the peripheral stalk), ATP18 (subunit i/j, part of the peripheral stalk), ATP19 (subunit k, dimer-specific, at interface between monomers), ATP20 (subunit g, at interface between monomers), TIM11 (subunit e, at interface between monomers).

It localises to the mitochondrion inner membrane. Its function is as follows. Mitochondrial membrane ATP synthase (F(1)F(0) ATP synthase or Complex V) produces ATP from ADP in the presence of a proton gradient across the membrane which is generated by electron transport complexes of the respiratory chain. F-type ATP synthases consist of two structural domains, F(1) - containing the extramembraneous catalytic core, and F(0) - containing the membrane proton channel, linked together by a central stalk and a peripheral stalk. During catalysis, ATP synthesis in the catalytic domain of F(1) is coupled via a rotary mechanism of the central stalk subunits to proton translocation. Part of the complex F(0) domain. Minor subunit located with subunit a/ATP6 in the membrane. This is ATP synthase subunit f, mitochondrial from Yarrowia lipolytica (strain CLIB 122 / E 150) (Yeast).